The sequence spans 354 residues: UDP-N-acetylglucosamine--N-acetylmuramyl-(pentapeptide) pyrophosphoryl-undecaprenol N-acetylglucosamine transferase (354 aa).

Residues 11–13, Arg-164, Ser-194, and Gln-289 contribute to the UDP-N-acetyl-alpha-D-glucosamine site; that span reads TAG.

It belongs to the glycosyltransferase 28 family. MurG subfamily.

It localises to the cell membrane. It carries out the reaction di-trans,octa-cis-undecaprenyl diphospho-N-acetyl-alpha-D-muramoyl-L-alanyl-D-glutamyl-meso-2,6-diaminopimeloyl-D-alanyl-D-alanine + UDP-N-acetyl-alpha-D-glucosamine = di-trans,octa-cis-undecaprenyl diphospho-[N-acetyl-alpha-D-glucosaminyl-(1-&gt;4)]-N-acetyl-alpha-D-muramoyl-L-alanyl-D-glutamyl-meso-2,6-diaminopimeloyl-D-alanyl-D-alanine + UDP + H(+). It functions in the pathway cell wall biogenesis; peptidoglycan biosynthesis. Its function is as follows. Cell wall formation. Catalyzes the transfer of a GlcNAc subunit on undecaprenyl-pyrophosphoryl-MurNAc-pentapeptide (lipid intermediate I) to form undecaprenyl-pyrophosphoryl-MurNAc-(pentapeptide)GlcNAc (lipid intermediate II). This chain is UDP-N-acetylglucosamine--N-acetylmuramyl-(pentapeptide) pyrophosphoryl-undecaprenol N-acetylglucosamine transferase, found in Clostridium botulinum (strain ATCC 19397 / Type A).